Here is a 417-residue protein sequence, read N- to C-terminus: Histidine biosynthesis bifunctional protein his7 (417 aa).

The interval 225–299 (GLVYSSKESV…HLDTLHCFGQ (75 aa)) is phosphoribosyl-AMP cyclohydrolase. The phosphoribosyl-ATP pyrophosphohydrolase stretch occupies residues 303-387 (LCQLEKTLID…ISRHLDLKHR (85 aa)).

The protein localises to the cytoplasm. The enzyme catalyses 1-(5-phospho-beta-D-ribosyl)-5'-AMP + H2O = 1-(5-phospho-beta-D-ribosyl)-5-[(5-phospho-beta-D-ribosylamino)methylideneamino]imidazole-4-carboxamide. The catalysed reaction is 1-(5-phospho-beta-D-ribosyl)-ATP + H2O = 1-(5-phospho-beta-D-ribosyl)-5'-AMP + diphosphate + H(+). The protein operates within amino-acid biosynthesis; L-histidine biosynthesis; L-histidine from 5-phospho-alpha-D-ribose 1-diphosphate: step 2/9. It functions in the pathway amino-acid biosynthesis; L-histidine biosynthesis; L-histidine from 5-phospho-alpha-D-ribose 1-diphosphate: step 3/9. This is Histidine biosynthesis bifunctional protein his7 from Schizosaccharomyces pombe (strain 972 / ATCC 24843) (Fission yeast).